Here is a 173-residue protein sequence, read N- to C-terminus: Alpha-crystallin A chain (173 aa).

Met1 is subject to N-acetylmethionine. The tract at residues 1 to 63 (MDVTIQHPWF…RTVLDSGISE (63 aa)) is required for complex formation with BFSP1 and BFSP2. Gln6 is subject to Deamidated glutamine; partial. Ser45 carries the phosphoserine modification. Gln50 carries the deamidated glutamine; partial modification. Residues 52–162 (LFRTVLDSGI…GHSERAIPVS (111 aa)) enclose the sHSP domain. Lys70 carries the N6-acetyllysine modification. Position 90 is a deamidated glutamine; partial (Gln90). Lys99 is modified (N6-acetyllysine). Zn(2+) contacts are provided by His100, Glu102, and His107. Ser122 is subject to Phosphoserine. Asn123 carries the post-translational modification Deamidated asparagine; partial. A disordered region spans residues 145 to 173 (KVQSGLDAGHSERAIPVSREEKPSSAPSS). Gln147 carries the deamidated glutamine; partial modification. A compositionally biased stretch (basic and acidic residues) spans 153–167 (GHSERAIPVSREEKP). His154 is a binding site for Zn(2+). An O-linked (GlcNAc) serine glycan is attached at Ser162.

This sequence belongs to the small heat shock protein (HSP20) family. Heteromer composed of three CRYAA and one CRYAB subunits. Inter-subunit bridging via zinc ions enhances stability, which is crucial as there is no protein turn over in the lens. Can also form homodimers and homotetramers (dimers of dimers) which serve as the building blocks of homooligomers. Within homooligomers, the zinc-binding motif is created from residues of 3 different molecules. His-100 and Glu-102 from one molecule are ligands of the zinc ion, and His-107 and His-154 residues from additional molecules complete the site with tetrahedral coordination geometry. Part of a complex required for lens intermediate filament formation composed of BFSP1, BFSP2 and CRYAA. Acetylation at Lys-70 may increase chaperone activity. Post-translationally, undergoes age-dependent proteolytical cleavage at the C-terminus.

It localises to the cytoplasm. Its subcellular location is the nucleus. Functionally, contributes to the transparency and refractive index of the lens. Acts as a chaperone, preventing aggregation of various proteins under a wide range of stress conditions. Required for the correct formation of lens intermediate filaments as part of a complex composed of BFSP1, BFSP2 and CRYAA. The chain is Alpha-crystallin A chain (CRYAA) from Ochotona princeps (Southern American pika).